Here is a 1068-residue protein sequence, read N- to C-terminus: Retinoblastoma-like protein 1 (1068 aa).

T332 is subject to Phosphothreonine; by CDK2. T369 is modified (phosphothreonine; by CDK4). A Phosphothreonine; by CDK2 modification is found at T385. A domain A region spans residues T385–K584. The interval T385 to Y949 is pocket; binds T and E1A. Residues V585–N780 form a spacer region. S640 carries the post-translational modification Phosphoserine; by CDK2 and CDK4. Phosphoserine occurs at positions 650 and 749. S762 is subject to Phosphoserine; by CDK2. The segment at R781 to Y949 is domain B. Phosphoserine; by CDK2 and CDK4 is present on residues S964 and S975. At S988 the chain carries Phosphoserine; by CDK2. T997 bears the Phosphothreonine; by CDK2 mark. Residue S1009 is modified to Phosphoserine; by CDK2. The residue at position 1041 (S1041) is a Phosphoserine.

This sequence belongs to the retinoblastoma protein (RB) family. Component of the DREAM complex (also named LINC complex) at least composed of E2F4, E2F5, LIN9, LIN37, LIN52, LIN54, MYBL1, MYBL2, RBL1, RBL2, RBBP4, TFDP1 and TFDP2. The complex exists in quiescent cells where it represses cell cycle-dependent genes. It dissociates in S phase when LIN9, LIN37, LIN52 and LIN54 form a subcomplex that binds to MYBL2. Interacts with AATF. Interacts with KDM5A. Interacts with KMT5B and KMT5C. Interacts with USP4. Interacts with RBBP9. In terms of assembly, (Microbial infection) Interacts with SV40 and JC virus large T antigens. Large T antigen, but not E1A, binds only to the unphosphorylated form. As to quaternary structure, (Microbial infection) Interacts with JC virus small t antigen. Cell-cycle arrest properties are inactivated by phosphorylation on Thr-332, Ser-640, Ser-964 and Ser-975 by CDK4.

The protein localises to the nucleus. Functionally, key regulator of entry into cell division. Directly involved in heterochromatin formation by maintaining overall chromatin structure and, in particular, that of constitutive heterochromatin by stabilizing histone methylation. Recruits and targets histone methyltransferases KMT5B and KMT5C, leading to epigenetic transcriptional repression. Controls histone H4 'Lys-20' trimethylation. Probably acts as a transcription repressor by recruiting chromatin-modifying enzymes to promoters. Potent inhibitor of E2F-mediated trans-activation. May act as a tumor suppressor. The sequence is that of Retinoblastoma-like protein 1 (RBL1) from Homo sapiens (Human).